We begin with the raw amino-acid sequence, 63 residues long: Mu-like prophage FluMu protein gp38 (63 aa).

This sequence to phage Mu protein gp38.

The chain is Mu-like prophage FluMu protein gp38 from Haemophilus influenzae (strain ATCC 51907 / DSM 11121 / KW20 / Rd).